The primary structure comprises 117 residues: Large ribosomal subunit protein bL19 (117 aa).

Belongs to the bacterial ribosomal protein bL19 family.

This protein is located at the 30S-50S ribosomal subunit interface and may play a role in the structure and function of the aminoacyl-tRNA binding site. This chain is Large ribosomal subunit protein bL19, found in Sorangium cellulosum (strain So ce56) (Polyangium cellulosum (strain So ce56)).